Here is a 101-residue protein sequence, read N- to C-terminus: Small ribosomal subunit protein uS14 (101 aa).

Belongs to the universal ribosomal protein uS14 family. In terms of assembly, part of the 30S ribosomal subunit. Contacts proteins S3 and S10.

In terms of biological role, binds 16S rRNA, required for the assembly of 30S particles and may also be responsible for determining the conformation of the 16S rRNA at the A site. In Acinetobacter baumannii (strain SDF), this protein is Small ribosomal subunit protein uS14.